Reading from the N-terminus, the 1016-residue chain is Coiled-coil domain-containing protein 57 (1016 aa).

Residues 1 to 503 (MLPLCSEREL…HGLLPGQEAQ (503 aa)) are centrosomal targeting domain. Coiled coils occupy residues 14–607 (LARK…PVKT), 676–700 (SEVD…KHLK), and 748–775 (VTHL…LLEM). Disordered regions lie at residues 500-519 (QEAQ…DSPS) and 549-573 (HLPP…DSTP). The interval 604–1016 (PVKTSVATAD…SRIRNYNLKD (413 aa)) is microtubule binding domain. Disordered stretches follow at residues 781–921 (AEQG…LASS) and 933–1016 (GSSP…NLKD). Polar residues-rich tracts occupy residues 846 to 859 (QPHS…TNTP) and 934 to 945 (SSPSGVPSQDNS).

In terms of assembly, interacts with CEP63; the interaction is required for their location to proximal end of centrioles. Interacts with microtubules.

It is found in the cytoplasm. Its subcellular location is the cytoskeleton. It localises to the microtubule organizing center. The protein localises to the centrosome. The protein resides in the centriolar satellite. It is found in the centriole. Its subcellular location is the spindle. Its function is as follows. Pleiotropic regulator of centriole duplication, mitosis, and ciliogenesis. Critical interface between centrosome and microtubule-mediated cellular processes. Centriole duplication protein required for recruitment of CEP63, CEP152, and PLK4 to the centrosome. Independent of its centrosomal targeting, localizes to and interacts with microtubules and regulates microtubule nucleation, stability, and mitotic progression. The polypeptide is Coiled-coil domain-containing protein 57 (Mus musculus (Mouse)).